We begin with the raw amino-acid sequence, 215 residues long: Adenylate kinase (215 aa).

ATP is bound at residue 10-15; that stretch reads GTGKGT. Positions 30-59 are NMP; sequence STGHILRKISTKKTLFGEKIKNIINSGKLV. AMP is bound by residues threonine 31, arginine 36, 57-59, 85-88, and glutamine 92; these read KLV and GFPR. Positions 122 to 157 are LID; that stretch reads TRTINPITGTIYNNVIQKNSELKNLKINTLKSRLDD. ATP is bound by residues arginine 123 and 132 to 133; that span reads IY. 2 residues coordinate AMP: arginine 154 and arginine 165. ATP is bound at residue asparagine 198.

Belongs to the adenylate kinase family. Monomer.

It is found in the cytoplasm. The enzyme catalyses AMP + ATP = 2 ADP. The protein operates within purine metabolism; AMP biosynthesis via salvage pathway; AMP from ADP: step 1/1. In terms of biological role, catalyzes the reversible transfer of the terminal phosphate group between ATP and AMP. Plays an important role in cellular energy homeostasis and in adenine nucleotide metabolism. The polypeptide is Adenylate kinase (Buchnera aphidicola subsp. Baizongia pistaciae (strain Bp)).